The primary structure comprises 152 residues: MHPAHLLVLLGVCVSLLGAASIPRPSLNIMLFGNMIQCTIPCEQSWLGYLDYGCYCGSGSSGIPVDDVDKCCKTHDECYYKAGQIPGCSVQPNEVFNVDYSYECNEGQLTCNESNNECEMAVCNCDRAAAICFARFPYNKNYWSINTEIHCR.

Residues 1–19 (MHPAHLLVLLGVCVSLLGA) form the signal peptide. 7 cysteine pairs are disulfide-bonded: C38–C104, C54–C151, C56–C72, C71–C132, C78–C125, C88–C118, and C111–C123. An N-linked (GlcNAc...) asparagine glycan is attached at N112.

This sequence belongs to the phospholipase A2 family. Group I subfamily. D49 sub-subfamily. In terms of assembly, heterohexamer. 2 forms exist: 2 A or 2 B chains, 2 C chains and 2 covalently-linked D chains, and 1 A or 1 B, 1 C, 2 covalently-linked D chains and 2 differentially glycosylated covalently-linked D chains. Textilotoxin was originally described as pentameric. In terms of tissue distribution, expressed by the venom gland.

The protein resides in the secreted. Snake venom oligomeric phospholipase A2 that has potent presynaptic neurotoxicity. Chain D is not itself neurotoxic, but it is essential for the neurotoxicity of textilotoxin. Chain D possesses a very low phospholipase activity. This chain is Acidic phospholipase A2 homolog textilotoxin D chain, found in Pseudonaja textilis (Eastern brown snake).